Consider the following 370-residue polypeptide: MKKKRVVVGMSGGVDSSVAAYLLKQEGYDVIGVFMKNWDDTNDDGVCTATEDYEDVKRVANQLGIPYYSVNFEKEYWDRVFTYFIDELKRGRTPNPDVLCNTEIKFKAFVDYALSLDADYIATGHYARINRENGQIALLRGKDPNKDQTYFLSQLTAEHLSKVLFPIGELTKDEVRKIAQELNLVNANKKDSTGICFIGERNFKNFLKNYLPAQPGEIRSLDGEVLGTHDGLMYYTIGQRKGLGIGGKGTGEPWYVVDKDLENNVLLVAQGKNHPALFSTGLIASNISFINGDVRPRTFACTAKFRYRQEDQKVTVHIRPNGTAFVEFEKPVKAVTPGQVAVFYDNDVCLGSAIIDEVIKMDASTATAAS.

Residues 9–16 (GMSGGVDS) and methionine 35 contribute to the ATP site. Residues 95-97 (NPD) form an interaction with target base in tRNA region. Catalysis depends on cysteine 100, which acts as the Nucleophile. Cysteine 100 and cysteine 196 are oxidised to a cystine. ATP is bound at residue glycine 124. The interaction with tRNA stretch occupies residues 146–148 (KDQ). The active-site Cysteine persulfide intermediate is cysteine 196. Residues 306–307 (RY) are interaction with tRNA.

The protein belongs to the MnmA/TRMU family.

The protein resides in the cytoplasm. The catalysed reaction is S-sulfanyl-L-cysteinyl-[protein] + uridine(34) in tRNA + AH2 + ATP = 2-thiouridine(34) in tRNA + L-cysteinyl-[protein] + A + AMP + diphosphate + H(+). In terms of biological role, catalyzes the 2-thiolation of uridine at the wobble position (U34) of tRNA, leading to the formation of s(2)U34. In Geobacillus kaustophilus (strain HTA426), this protein is tRNA-specific 2-thiouridylase MnmA 1.